The sequence spans 445 residues: KIN17-like protein (445 aa).

The segment at 26 to 50 (WYCQLCEKQCRDENGFKCHISSESH) adopts a C2H2-type zinc-finger fold. 2 stretches are compositionally biased toward low complexity: residues 215–229 (NTTTTTTNTTTTTTN) and 239–253 (NDNNSSNNNYNDQTN). The disordered stretch occupies residues 215–256 (NTTTTTTNTTTTTTNKNIFDKLKTNDNNSSNNNYNDQTNPKP).

This sequence belongs to the KIN17 family.

The polypeptide is KIN17-like protein (Dictyostelium discoideum (Social amoeba)).